A 301-amino-acid chain; its full sequence is Coiled-coil domain-containing protein 69-B (301 aa).

The tract at residues 1 to 43 (MGSKTSKMCCPQLRKKKRQKAHKEGPSSQELNDLNAKSQGPNE) is disordered. Residue G2 is the site of N-myristoyl glycine attachment. Residues 26–41 (PSSQELNDLNAKSQGP) are compositionally biased toward polar residues. 2 coiled-coil regions span residues 42–167 (NELL…SILS) and 213–281 (KSTM…NLYR).

It belongs to the CCDC69 family.

Its subcellular location is the cytoplasm. The protein resides in the cytoskeleton. It localises to the spindle. It is found in the midbody. Functionally, may act as a scaffold to regulate the recruitment and assembly of spindle midzone components. The chain is Coiled-coil domain-containing protein 69-B (ccdc69-b) from Xenopus laevis (African clawed frog).